Here is a 228-residue protein sequence, read N- to C-terminus: Triosephosphate isomerase (228 aa).

Substrate is bound at residue 9–11; the sequence is NFK. Catalysis depends on histidine 93, which acts as the Electrophile. The Proton acceptor role is filled by glutamate 141. Residues isoleucine 146, glycine 181, and 202 to 203 contribute to the substrate site; that span reads AS.

Belongs to the triosephosphate isomerase family. In terms of assembly, homotetramer; dimer of dimers.

It is found in the cytoplasm. It catalyses the reaction D-glyceraldehyde 3-phosphate = dihydroxyacetone phosphate. It functions in the pathway carbohydrate biosynthesis; gluconeogenesis. Its pathway is carbohydrate degradation; glycolysis; D-glyceraldehyde 3-phosphate from glycerone phosphate: step 1/1. Involved in the gluconeogenesis. Catalyzes stereospecifically the conversion of dihydroxyacetone phosphate (DHAP) to D-glyceraldehyde-3-phosphate (G3P). The polypeptide is Triosephosphate isomerase (Pyrobaculum calidifontis (strain DSM 21063 / JCM 11548 / VA1)).